The primary structure comprises 466 residues: Methylenetetrahydrofolate--tRNA-(uracil-5-)-methyltransferase TrmFO (466 aa).

An FAD-binding site is contributed by 16 to 21 (GGGMAG).

Belongs to the MnmG family. TrmFO subfamily. FAD is required as a cofactor.

It is found in the cytoplasm. It catalyses the reaction uridine(54) in tRNA + (6R)-5,10-methylene-5,6,7,8-tetrahydrofolate + NADH + H(+) = 5-methyluridine(54) in tRNA + (6S)-5,6,7,8-tetrahydrofolate + NAD(+). It carries out the reaction uridine(54) in tRNA + (6R)-5,10-methylene-5,6,7,8-tetrahydrofolate + NADPH + H(+) = 5-methyluridine(54) in tRNA + (6S)-5,6,7,8-tetrahydrofolate + NADP(+). Functionally, catalyzes the folate-dependent formation of 5-methyl-uridine at position 54 (M-5-U54) in all tRNAs. The polypeptide is Methylenetetrahydrofolate--tRNA-(uracil-5-)-methyltransferase TrmFO (Maricaulis maris (strain MCS10) (Caulobacter maris)).